A 139-amino-acid chain; its full sequence is MKRTLSILKPDVISRNITGKVNAYIEAAGLQIIAMKQLHLTRIQAEAFYVVHKDRFFFNDLVNFMTSAPVIVQVLSGDDAVHRYRKLMGDTDPKKAAKGTIRGDFAESIDANCVHGSDSEENAKNEIAFFFSRCEIFDR.

ATP is bound by residues Lys-9, Phe-57, Arg-85, Thr-91, Arg-102, and Asn-112. His-115 serves as the catalytic Pros-phosphohistidine intermediate.

Belongs to the NDK family. Homotetramer. Requires Mg(2+) as cofactor.

The protein resides in the cytoplasm. The enzyme catalyses a 2'-deoxyribonucleoside 5'-diphosphate + ATP = a 2'-deoxyribonucleoside 5'-triphosphate + ADP. It carries out the reaction a ribonucleoside 5'-diphosphate + ATP = a ribonucleoside 5'-triphosphate + ADP. Major role in the synthesis of nucleoside triphosphates other than ATP. The ATP gamma phosphate is transferred to the NDP beta phosphate via a ping-pong mechanism, using a phosphorylated active-site intermediate. The chain is Nucleoside diphosphate kinase from Neorickettsia sennetsu (strain ATCC VR-367 / Miyayama) (Ehrlichia sennetsu).